A 212-amino-acid chain; its full sequence is Pyridoxine/pyridoxamine 5'-phosphate oxidase (212 aa).

Substrate contacts are provided by residues 8-11 and K66; that span reads RRTY. FMN is bound by residues 61-66, 76-77, R82, K83, and Q105; these read RIVLLK and FT. Residues Y123, R127, and S131 each coordinate substrate. FMN is bound by residues 140-141 and W184; that span reads QS. A substrate-binding site is contributed by 190–192; the sequence is RLH. FMN is bound at residue R194.

Belongs to the pyridoxamine 5'-phosphate oxidase family. Homodimer. Requires FMN as cofactor.

It catalyses the reaction pyridoxamine 5'-phosphate + O2 + H2O = pyridoxal 5'-phosphate + H2O2 + NH4(+). The catalysed reaction is pyridoxine 5'-phosphate + O2 = pyridoxal 5'-phosphate + H2O2. The protein operates within cofactor metabolism; pyridoxal 5'-phosphate salvage; pyridoxal 5'-phosphate from pyridoxamine 5'-phosphate: step 1/1. Its pathway is cofactor metabolism; pyridoxal 5'-phosphate salvage; pyridoxal 5'-phosphate from pyridoxine 5'-phosphate: step 1/1. In terms of biological role, catalyzes the oxidation of either pyridoxine 5'-phosphate (PNP) or pyridoxamine 5'-phosphate (PMP) into pyridoxal 5'-phosphate (PLP). This chain is Pyridoxine/pyridoxamine 5'-phosphate oxidase, found in Cupriavidus taiwanensis (strain DSM 17343 / BCRC 17206 / CCUG 44338 / CIP 107171 / LMG 19424 / R1) (Ralstonia taiwanensis (strain LMG 19424)).